The sequence spans 345 residues: Heat-inducible transcription repressor HrcA (345 aa).

It belongs to the HrcA family.

Negative regulator of class I heat shock genes (grpE-dnaK-dnaJ and groELS operons). Prevents heat-shock induction of these operons. In Corynebacterium diphtheriae (strain ATCC 700971 / NCTC 13129 / Biotype gravis), this protein is Heat-inducible transcription repressor HrcA.